The primary structure comprises 135 residues: C-type lectin PAL (135 aa).

Disulfide bonds link cysteine 3/cysteine 14, cysteine 31/cysteine 131, cysteine 38/cysteine 133, and cysteine 106/cysteine 123. One can recognise a C-type lectin domain in the interval 10 to 132 (MNGLCYKIFD…CGSKNAFLCQ (123 aa)). Glutamine 96, aspartate 98, glutamate 104, asparagine 119, and aspartate 120 together coordinate Ca(2+). The short motif at 96 to 98 (QPD) is the Galactose-binding element.

Belongs to the true venom lectin family. Homodimer; disulfide-linked. As to expression, expressed by the venom gland.

It localises to the secreted. Functionally, galactose-binding lectin which recognizes specific carbohydrate structures and agglutinates a variety of animal cells by binding to cell-surface glycoproteins and glycolipids. This is a calcium-dependent lectin. Shows high hemagglutinating activity (MHC is 0.25 ug/ml on rabbit erythrocytes). In Bitis arietans (African puff adder), this protein is C-type lectin PAL.